We begin with the raw amino-acid sequence, 797 residues long: METAKDGEQSPSEASPSAQAGPENIPEPMSREEESQPLYHEETIDLGGDEFASEENEPTSEGSHNFGDKLNEHMMESVLISDSPNNSEGDVGDLGCLQDVGEPPRGATDHRLPSSTDKEVVDTLSNGSETDGDDTPRDISDMTPDSRASLKEDSTQEDVTSMPALENAATEEVGPKDSLAPREEQTSEVSSNQSSSKDEPLPVCTIFSQATATPSQPHLFLQDGFESQMVKSPSFSSTSETSAKTPPPMVQPSPSLSTFFGDTMSSNSLASDFFDSFTTSTFISVSNPNAGSPVPEKLSSLTAPVGEKSPDSTSPSYSTRMDRSESGVSRAPLDVPESPKPFSQIQAVFAGSDDPFATALSMSEMDRRNDAWLPSQATREVLMSVATQQYGTVFIDKENLTMPGLKFDNIQGDAVKDLMLRFLGEKAAAKRQVLNASSVEQSFVGLKQLISCRNWRAAVDLCGRLLTAHGQGYGKNGLPTSHTTDSLQLWFVRLALLVKLGLFQNAEMEFEPFGNLDQPDLYYEYYPHVYPGRRGSMVPFSMRILHAELQQYLGNPQESLDRLHRVKTVCSKILANLEQGLAEDGGLSSVTQESRQASVQLWRSRLGRVLYSMANCLLLMKDYVLAVDAYLTVIKYYPEQEPQLLSGIGRILLQIGDIKTAEKYFQDVEKVTQKLDGLQGKIMVLMNRAFLYLGQNNFAEAHKFFTEILRMDPTNAVANNNAAVCLLYLGKLKDSLRQLEAMVQQDPRHYLHESVLFNLTTMYELESSRSMQKKQSLLEAVASKEGDSFNTQCLKLA.

Disordered stretches follow at residues 1 to 257 (META…PSLS) and 286 to 338 (SNPN…VPES). Residues 9–23 (QSPSEASPSAQAGPE) are compositionally biased toward low complexity. The span at 29 to 43 (MSREEESQPLYHEET) shows a compositional bias: basic and acidic residues. Acidic residues predominate over residues 47–58 (GGDEFASEENEP). Basic and acidic residues-rich tracts occupy residues 66–75 (FGDKLNEHMM) and 107–121 (ATDH…KEVV). Phosphoserine is present on residues Ser-125 and Ser-128. Phosphothreonine is present on Thr-130. Over residues 173–185 (VGPKDSLAPREEQ) the composition is skewed to basic and acidic residues. The span at 206–216 (IFSQATATPSQ) shows a compositional bias: polar residues. Residues 232–244 (SPSFSSTSETSAK) are compositionally biased toward low complexity. Residues Ser-234, Ser-309, and Ser-314 each carry the phosphoserine modification. TPR repeat units follow at residues 607-640 (GRVL…YPEQ), 642-675 (PQLL…TQKL), 682-715 (IMVL…DPTN), and 716-749 (AVAN…DPRH).

In terms of assembly, component of the multisubunit TRAPP (transport protein particle) complex, which includes at least TRAPPC2, TRAPPC2L, TRAPPC3, TRAPPC3L, TRAPPC4, TRAPPC5, TRAPPC8, TRAPPC9, TRAPPC10, TRAPPC11 and TRAPPC12. Interacts with CENPE. In terms of processing, phosphorylated as the cells enter mitosis but is dephosphorylated at or before the onset of anaphase. The phosphorylated form recruits CENPE to kinetochores more efficiently than the non-phosphorylated form.

It localises to the endoplasmic reticulum-Golgi intermediate compartment. The protein resides in the nucleus. In terms of biological role, component of the TRAPP complex, which is involved in endoplasmic reticulum to Golgi apparatus trafficking at a very early stage. Also plays a role in chromosome congression, kinetochore assembly and stability and controls the recruitment of CENPE to the kinetochores. This Mus musculus (Mouse) protein is Trafficking protein particle complex subunit 12.